Here is a 231-residue protein sequence, read N- to C-terminus: Uracil-DNA glycosylase (231 aa).

Catalysis depends on D74, which acts as the Proton acceptor.

The protein belongs to the uracil-DNA glycosylase (UDG) superfamily. UNG family.

It is found in the cytoplasm. The catalysed reaction is Hydrolyzes single-stranded DNA or mismatched double-stranded DNA and polynucleotides, releasing free uracil.. Functionally, excises uracil residues from the DNA which can arise as a result of misincorporation of dUMP residues by DNA polymerase or due to deamination of cytosine. This chain is Uracil-DNA glycosylase, found in Campylobacter jejuni (strain RM1221).